Consider the following 411-residue polypeptide: MSDLLPLATYSLNVEPYTPVPAIDVTMPITVRITMAALNPEAIDEENKPSTLRIIKRNPDFEDDDFLGGDFDEDEIDEESSEEEEEEKTQKKKKSKGKKAESESEDDEEDDDEDDEFQESVLLTLSPEAQYQQSLDLTITPEEEVQFIVTGSYAISLSGNYVKHPFDTPMGVEGEDEDEDADIYDSEDYDLTPDEDEIIGDDMDDLDDEEEEEVRIEEVQEEDEEDNDGEEEQEEEEEEEQKEEVKPEPKKSKKEKKRKHEEKEEEKKAKKVKKVEFKKDLEEGPTKPKSKKEQDKHKPKSKVLEGGIVIEDRTIGDGPQAKRGARVGMRYIGKLKNGKVFDKNTSGKPFAFKLGRGEVIKGWDIGVAGMSVGGERRIIIPAPYAYGKQALPGIPANSELTFDVKLVSMKN.

Ser2 carries the post-translational modification N-acetylserine. Disordered stretches follow at residues 54-127 (IIKR…TLSP) and 160-302 (NYVK…PKSK). Residues 61 to 87 (FEDDDFLGGDFDEDEIDEESSEEEEEE) are compositionally biased toward acidic residues. Phosphoserine occurs at positions 80 and 81. Thr89 carries the phosphothreonine modification. Acidic residues-rich tracts occupy residues 103-118 (ESEDDEEDDDEDDEFQ) and 173-242 (EGED…EEQK). Tyr184 bears the Phosphotyrosine; by CK2 mark. Ser186 is modified (phosphoserine; by CK2). The segment covering 251–260 (KSKKEKKRKH) has biased composition (basic residues). The Nuclear localization signal motif lies at 256 to 271 (KKRKHEEKEEEKKAKK). Positions 261–296 (EEKEEEKKAKKVKKVEFKKDLEEGPTKPKSKKEQDK) are enriched in basic and acidic residues. The PPIase FKBP-type domain occupies 324–411 (GARVGMRYIG…FDVKLVSMKN (88 aa)).

Belongs to the FKBP-type PPIase family. FKBP3/4 subfamily. Interacts with NOP53. In terms of processing, phosphorylated at tyrosine and dephosphorylated by the phosphotyrosine-specific phosphoprotein phosphatase PTP1.

Its subcellular location is the nucleus. It is found in the nucleolus. It catalyses the reaction [protein]-peptidylproline (omega=180) = [protein]-peptidylproline (omega=0). Its activity is regulated as follows. Inhibited by both FK506 and rapamycin. In terms of biological role, proline isomerase that belongs to an abundant class of enzymes that catalyze the cis-trans isomerization of X-Pro peptide bonds and can accelerate the refolding of proline-containing polypeptides. Specifically binds nuclear localization sequences. May be involved in the assembly or folding of ribosomal proteins. The chain is Peptidyl-prolyl cis-trans isomerase from Saccharomyces cerevisiae (strain ATCC 204508 / S288c) (Baker's yeast).